The chain runs to 336 residues: Ketol-acid reductoisomerase (NADP(+)) (336 aa).

Positions 1–182 (MAVIYYDKDA…GVTRAGVIET (182 aa)) constitute a KARI N-terminal Rossmann domain. Residues 25 to 28 (YGSQ), arginine 48, serine 51, serine 53, and 83 to 86 (DEHQ) contribute to the NADP(+) site. Histidine 108 is a catalytic residue. Glycine 134 contributes to the NADP(+) binding site. The region spanning 183 to 328 (TFKEETETDL…KELRKMMPWL (146 aa)) is the KARI C-terminal knotted domain. Positions 191, 195, 227, and 231 each coordinate Mg(2+). Residue serine 252 participates in substrate binding.

The protein belongs to the ketol-acid reductoisomerase family. Mg(2+) is required as a cofactor.

It carries out the reaction (2R)-2,3-dihydroxy-3-methylbutanoate + NADP(+) = (2S)-2-acetolactate + NADPH + H(+). The enzyme catalyses (2R,3R)-2,3-dihydroxy-3-methylpentanoate + NADP(+) = (S)-2-ethyl-2-hydroxy-3-oxobutanoate + NADPH + H(+). The protein operates within amino-acid biosynthesis; L-isoleucine biosynthesis; L-isoleucine from 2-oxobutanoate: step 2/4. It functions in the pathway amino-acid biosynthesis; L-valine biosynthesis; L-valine from pyruvate: step 2/4. Its function is as follows. Involved in the biosynthesis of branched-chain amino acids (BCAA). Catalyzes an alkyl-migration followed by a ketol-acid reduction of (S)-2-acetolactate (S2AL) to yield (R)-2,3-dihydroxy-isovalerate. In the isomerase reaction, S2AL is rearranged via a Mg-dependent methyl migration to produce 3-hydroxy-3-methyl-2-ketobutyrate (HMKB). In the reductase reaction, this 2-ketoacid undergoes a metal-dependent reduction by NADPH to yield (R)-2,3-dihydroxy-isovalerate. The protein is Ketol-acid reductoisomerase (NADP(+)) of Thermotoga maritima (strain ATCC 43589 / DSM 3109 / JCM 10099 / NBRC 100826 / MSB8).